Here is a 196-residue protein sequence, read N- to C-terminus: Calcineurin B homologous protein 2 (196 aa).

Glycine 2 carries N-myristoyl glycine lipidation. EF-hand domains are found at residues 26–61 (ASLLRLHHRFRALDRNKKGYLSRMDLQQIGALAVNP), 71–106 (FPDGSQRVDFPGFVRVLAHFRPVEDEDTETQDPKKP), 111–146 (SRRNKLHYAFQLYDLDRDGKISRHEMLQVLRLMVGV), and 152–187 (QLENIADRTVQEADEDGDGAVSFVEFTKSLEKMDVE). Serine 27 carries the post-translational modification Phosphoserine. Ca(2+) is bound by residues aspartate 124, aspartate 126, aspartate 128, lysine 130, and glutamate 135. Residues 137–148 (LQVLRLMVGVQV) carry the Nuclear export signal motif. Positions 165, 167, 169, and 176 each coordinate Ca(2+).

The protein belongs to the calcineurin regulatory subunit family. CHP subfamily. As to quaternary structure, interacts with PPP3CA. Interacts with SLC9A1/NHE1; the interaction occurs in a calcium-dependent manner. Expressed in malignantly transformed cells but not detected in normal tissues.

It localises to the nucleus. Its subcellular location is the cytoplasm. It is found in the cell membrane. In terms of biological role, functions as an integral cofactor in cell pH regulation by controlling plasma membrane-type Na(+)/H(+) exchange activity. Binds to and activates SLC9A1/NHE1 in a serum-independent manner, thus increasing pH and protecting cells from serum deprivation-induced death. Also plays a role in the regulation of cell proliferation and tumor growth by increasing the phosphatase activity of PPP3CA in a calcium-dependent manner. Activator of the calcineurin/NFAT signaling pathway. Involved in the cytoplasmic translocation of the transcription factor NFATC3 to the nucleus. The polypeptide is Calcineurin B homologous protein 2 (CHP2) (Homo sapiens (Human)).